A 217-amino-acid polypeptide reads, in one-letter code: uncharacterized protein (217 aa).

7 consecutive transmembrane segments (helical) span residues 4 to 23, 44 to 66, 76 to 98, 111 to 128, 132 to 154, 166 to 188, and 198 to 215; these read IYGI…GKET, NVVI…LTWV, TVET…SIII, FLYL…IHAI, MAMV…PLAL, AGTA…IVLF, and LLLS…ALQL.

The protein localises to the cell membrane. This is an uncharacterized protein from Archaeoglobus fulgidus (strain ATCC 49558 / DSM 4304 / JCM 9628 / NBRC 100126 / VC-16).